The following is a 777-amino-acid chain: Penicillin-binding protein 1B (777 aa).

Topologically, residues 1–30 (MTRKSSNRSRGRKARSGKSASSSKLQIWLG) are cytoplasmic. The chain crosses the membrane as a helical; Signal-anchor for type II membrane protein span at residues 31–52 (RIWSIGWKLALTLAAVLVFIGI). Topologically, residues 53-777 (YLDSMIKQRF…TEWIKKLFEW (725 aa)) are periplasmic. Positions 162 to 334 (LRLEPKLMGM…SYYNPMRYAE (173 aa)) are transglycosylase. Glu-200 (proton donor; for transglycosylase activity) is an active-site residue. The transpeptidase stretch occupies residues 415-709 (SKLEQAIHDQ…ASGALRVYAQ (295 aa)). Catalysis depends on Ser-476, which acts as the Acyl-ester intermediate; for transpeptidase activity.

The protein in the N-terminal section; belongs to the glycosyltransferase 51 family. It in the C-terminal section; belongs to the transpeptidase family.

The protein resides in the cell inner membrane. It catalyses the reaction [GlcNAc-(1-&gt;4)-Mur2Ac(oyl-L-Ala-gamma-D-Glu-L-Lys-D-Ala-D-Ala)](n)-di-trans,octa-cis-undecaprenyl diphosphate + beta-D-GlcNAc-(1-&gt;4)-Mur2Ac(oyl-L-Ala-gamma-D-Glu-L-Lys-D-Ala-D-Ala)-di-trans,octa-cis-undecaprenyl diphosphate = [GlcNAc-(1-&gt;4)-Mur2Ac(oyl-L-Ala-gamma-D-Glu-L-Lys-D-Ala-D-Ala)](n+1)-di-trans,octa-cis-undecaprenyl diphosphate + di-trans,octa-cis-undecaprenyl diphosphate + H(+). The enzyme catalyses Preferential cleavage: (Ac)2-L-Lys-D-Ala-|-D-Ala. Also transpeptidation of peptidyl-alanyl moieties that are N-acyl substituents of D-alanine.. It functions in the pathway cell wall biogenesis; peptidoglycan biosynthesis. Its function is as follows. Cell wall formation. Synthesis of cross-linked peptidoglycan from the lipid intermediates. The enzyme has a penicillin-insensitive transglycosylase N-terminal domain (formation of linear glycan strands) and a penicillin-sensitive transpeptidase C-terminal domain (cross-linking of the peptide subunits). The polypeptide is Penicillin-binding protein 1B (mrcB) (Vibrio cholerae serotype O1 (strain ATCC 39315 / El Tor Inaba N16961)).